Here is a 508-residue protein sequence, read N- to C-terminus: Photosystem II CP47 reaction center protein (508 aa).

6 helical membrane-spanning segments follow: residues 21 to 36, 101 to 115, 140 to 156, 203 to 218, 237 to 252, and 457 to 472; these read SVHI…WAGS, IVFS…IWHW, GIHL…FGAF, IAAG…FHLS, VLSS…AFVV, and SFAL…HGSR.

It belongs to the PsbB/PsbC family. PsbB subfamily. PSII is composed of 1 copy each of membrane proteins PsbA, PsbB, PsbC, PsbD, PsbE, PsbF, PsbH, PsbI, PsbJ, PsbK, PsbL, PsbM, PsbT, PsbX, PsbY, PsbZ, Psb30/Ycf12, at least 3 peripheral proteins of the oxygen-evolving complex and a large number of cofactors. It forms dimeric complexes. The cofactor is Binds multiple chlorophylls. PSII binds additional chlorophylls, carotenoids and specific lipids..

It is found in the plastid. The protein resides in the chloroplast thylakoid membrane. Functionally, one of the components of the core complex of photosystem II (PSII). It binds chlorophyll and helps catalyze the primary light-induced photochemical processes of PSII. PSII is a light-driven water:plastoquinone oxidoreductase, using light energy to abstract electrons from H(2)O, generating O(2) and a proton gradient subsequently used for ATP formation. In Lobularia maritima (Sweet alyssum), this protein is Photosystem II CP47 reaction center protein.